The sequence spans 313 residues: Porphobilinogen deaminase (313 aa).

Cys242 is subject to S-(dipyrrolylmethanemethyl)cysteine.

It belongs to the HMBS family. Monomer. Dipyrromethane serves as cofactor.

The catalysed reaction is 4 porphobilinogen + H2O = hydroxymethylbilane + 4 NH4(+). The protein operates within porphyrin-containing compound metabolism; protoporphyrin-IX biosynthesis; coproporphyrinogen-III from 5-aminolevulinate: step 2/4. Functionally, tetrapolymerization of the monopyrrole PBG into the hydroxymethylbilane pre-uroporphyrinogen in several discrete steps. This is Porphobilinogen deaminase from Escherichia coli (strain SE11).